A 289-amino-acid polypeptide reads, in one-letter code: SAGA-associated factor 29kDa (289 aa).

A coiled-coil region spans residues 9-36 (AQQIQDRLKDIQQNIHNVDEERRRAENS). One can recognise an SGF29 C-terminal domain in the interval 137 to 278 (GNYVAKVGDN…VIAYRPTKKG (142 aa)). Histone H3K4me3 N-terminus binding regions lie at residues 179–181 (DID) and 225–228 (QTTC). The interval 249–251 (FED) is histone H3K4me3 binding.

This sequence belongs to the SGF29 family. As to quaternary structure, component of the Spt-Ada-Gcn5 acetyltransferase (SAGA) complex consisting of wda/Taf5L, Saf6, Taf9, Taf10b, Taf12, Ada1, Spt3, Spt7, Spt20, Sf3b3, Sf3b5, Nipped-A/Tra1, a histone acetyltransferase (HAT) module made up of Gcn5, Ada2b (Isoform B), Ada3 and Sgf29, and a deubiquitinase (DUB) module made up of not/nonstop, Sgf11, Atxn7 and e(y)2. Component of the Chiffon histone acetyltransferase (CHAT) complex consisting of Ada3, Sgf29, Gcn5, chif/chiffon and Ada2b (Isoform A).

Its subcellular location is the nucleus. Its function is as follows. Component of both the SAGA and CHAT histone acetyltransferase complexes, which both predominantly acetylate histone H3. The polypeptide is SAGA-associated factor 29kDa (Drosophila melanogaster (Fruit fly)).